A 253-amino-acid chain; its full sequence is Indole-3-glycerol phosphate synthase (253 aa).

This sequence belongs to the TrpC family.

The enzyme catalyses 1-(2-carboxyphenylamino)-1-deoxy-D-ribulose 5-phosphate + H(+) = (1S,2R)-1-C-(indol-3-yl)glycerol 3-phosphate + CO2 + H2O. Its pathway is amino-acid biosynthesis; L-tryptophan biosynthesis; L-tryptophan from chorismate: step 4/5. This Bacillus cereus (strain AH187) protein is Indole-3-glycerol phosphate synthase.